We begin with the raw amino-acid sequence, 508 residues long: Probable cytosol aminopeptidase (508 aa).

Mn(2+) is bound by residues K274 and D279. The active site involves K286. The Mn(2+) site is built by D297, D356, and E358. Residue R360 is part of the active site.

Belongs to the peptidase M17 family. The cofactor is Mn(2+).

The protein localises to the cytoplasm. The enzyme catalyses Release of an N-terminal amino acid, Xaa-|-Yaa-, in which Xaa is preferably Leu, but may be other amino acids including Pro although not Arg or Lys, and Yaa may be Pro. Amino acid amides and methyl esters are also readily hydrolyzed, but rates on arylamides are exceedingly low.. It carries out the reaction Release of an N-terminal amino acid, preferentially leucine, but not glutamic or aspartic acids.. In terms of biological role, presumably involved in the processing and regular turnover of intracellular proteins. Catalyzes the removal of unsubstituted N-terminal amino acids from various peptides. This is Probable cytosol aminopeptidase from Paraburkholderia xenovorans (strain LB400).